We begin with the raw amino-acid sequence, 182 residues long: Adenylate kinase (182 aa).

12–17 contributes to the ATP binding site; sequence GAGKGT. An NMP region spans residues 32–61; the sequence is STGDLLRDEVSSGSVLGIKAAEIMNKGELV. AMP-binding positions include Thr33, Arg38, 59–61, 85–88, and Gln92; these read ELV and GFPR. Positions 126-132 are LID; sequence ERGRQDD. ATP is bound at residue Arg127. Residues Arg129 and Arg140 each contribute to the AMP site. Residue Ala168 coordinates ATP.

It belongs to the adenylate kinase family. In terms of assembly, monomer.

It is found in the cytoplasm. The enzyme catalyses AMP + ATP = 2 ADP. The protein operates within purine metabolism; AMP biosynthesis via salvage pathway; AMP from ADP: step 1/1. Catalyzes the reversible transfer of the terminal phosphate group between ATP and AMP. Plays an important role in cellular energy homeostasis and in adenine nucleotide metabolism. The polypeptide is Adenylate kinase (Prochlorococcus marinus (strain NATL2A)).